The chain runs to 184 residues: NADH-quinone oxidoreductase subunit B (184 aa).

C37, C38, C103, and C132 together coordinate [4Fe-4S] cluster.

Belongs to the complex I 20 kDa subunit family. In terms of assembly, NDH-1 is composed of 14 different subunits. Subunits NuoB, C, D, E, F, and G constitute the peripheral sector of the complex. Requires [4Fe-4S] cluster as cofactor.

It localises to the cell membrane. The catalysed reaction is a quinone + NADH + 5 H(+)(in) = a quinol + NAD(+) + 4 H(+)(out). NDH-1 shuttles electrons from NADH, via FMN and iron-sulfur (Fe-S) centers, to quinones in the respiratory chain. The immediate electron acceptor for the enzyme in this species is believed to be a menaquinone. Couples the redox reaction to proton translocation (for every two electrons transferred, four hydrogen ions are translocated across the cytoplasmic membrane), and thus conserves the redox energy in a proton gradient. The sequence is that of NADH-quinone oxidoreductase subunit B from Nocardioides sp. (strain ATCC BAA-499 / JS614).